The following is a 346-amino-acid chain: MGAMRIATLTSGGDCPGLNAVIRGIVRTASNEFGSTVVGYQDGWEGLLADRRVQLYDDEDIDRILLRGGTILGTGRLHPDKFRAGIDQVKANLADAGIDALIPIGGEGTLKGAKWLADNGIPVVGVPKTIDNDVNGTDFTFGFDSAVSVATDAIDRLHTTAESHNRVMIVEVMGRHVGWIALHAGMAGGAHYTVIPEVPFDISEICKRMERRFQMGEKYGIIVVAEGALPKEGTMELREGEVDQFGHKTFTGIGQQIADEVHRRLGHDVRTTVLGHIQRGGTPTAFDRVLATRYGVRAARACHEGQFNTVVALKGERIRMISFDEAVGTLKKVPMERWVTAQAMFG.

ATP is bound by residues G13, 76-77 (RL), and 106-109 (GEGT). E107 is a Mg(2+) binding site. Substrate contacts are provided by residues 129–131 (TID), R166, 173–175 (MGR), E226, R270, and 276–279 (HIQR). D131 acts as the Proton acceptor in catalysis.

Belongs to the phosphofructokinase type A (PFKA) family. Mixed-substrate PFK group III subfamily. In terms of assembly, homodimer or homotetramer. Requires Mg(2+) as cofactor.

Its subcellular location is the cytoplasm. The catalysed reaction is beta-D-fructose 6-phosphate + ATP = beta-D-fructose 1,6-bisphosphate + ADP + H(+). It functions in the pathway carbohydrate degradation; glycolysis; D-glyceraldehyde 3-phosphate and glycerone phosphate from D-glucose: step 3/4. Its function is as follows. Catalyzes the phosphorylation of D-fructose 6-phosphate to fructose 1,6-bisphosphate by ATP, the first committing step of glycolysis. This chain is ATP-dependent 6-phosphofructokinase, found in Corynebacterium efficiens (strain DSM 44549 / YS-314 / AJ 12310 / JCM 11189 / NBRC 100395).